The primary structure comprises 364 residues: Probable 7-methylxanthine methyltransferase 5 (364 aa).

Tyr19 serves as a coordination point for S-adenosyl-L-homocysteine. Thr26 serves as a coordination point for theobromine. Residues Cys64, Gln69, Asp101, Leu102, Ser134, and Phe135 each coordinate S-adenosyl-L-homocysteine. 3 residues coordinate theobromine: Tyr152, His155, and Trp156. Asn172, Asp258, Phe260, and Asn261 together coordinate Mg(2+). Residue Phe314 coordinates theobromine.

It belongs to the methyltransferase superfamily. Type-7 methyltransferase family. Requires Mg(2+) as cofactor.

The enzyme catalyses 7-methylxanthine + S-adenosyl-L-methionine = theobromine + S-adenosyl-L-homocysteine + H(+). It functions in the pathway alkaloid biosynthesis. In terms of biological role, involved in the biosynthesis of theobromine. This is Probable 7-methylxanthine methyltransferase 5 from Theobroma cacao (Cacao).